The following is a 492-amino-acid chain: G2/mitotic-specific cyclin CYB1 (492 aa).

A disordered region spans residues 1 to 176 (MPQVTKTNNE…QPEVGERSQS (176 aa)). Residues 23-33 (QESISTIKNTT) show a composition bias toward polar residues. A compositionally biased stretch (low complexity) spans 34–58 (ISNSQHKQQTQQQISSPPQVSVTSS). A compositionally biased stretch (polar residues) spans 59–83 (EGVSHVNTRQYLGDVSNQYITNAKP). Over residues 111–135 (ASDNNNNGSTSSSSNSSNNNNNDAN) the composition is skewed to low complexity.

Belongs to the cyclin family. Cyclin AB subfamily.

Its function is as follows. Essential for the control of the cell cycle at the G2/M (mitosis) transition. Interacts with the CDC2 protein kinase to form MPF. G2/M cyclins accumulate steadily during G2 and are abruptly destroyed at mitosis. The protein is G2/mitotic-specific cyclin CYB1 (CYB1) of Candida albicans (Yeast).